The chain runs to 454 residues: Aspartokinase 3 (454 aa).

2 ACT domains span residues 312-388 and 389-454; these read ISKY…ALIM and VVGE…VLIS.

The protein belongs to the aspartokinase family. As to quaternary structure, monomer.

The enzyme catalyses L-aspartate + ATP = 4-phospho-L-aspartate + ADP. The protein operates within amino-acid biosynthesis; L-lysine biosynthesis via DAP pathway; (S)-tetrahydrodipicolinate from L-aspartate: step 1/4. It participates in amino-acid biosynthesis; L-methionine biosynthesis via de novo pathway; L-homoserine from L-aspartate: step 1/3. Its pathway is amino-acid biosynthesis; L-threonine biosynthesis; L-threonine from L-aspartate: step 1/5. Catalyzes the phosphorylation of the beta-carboxyl group of aspartic acid with ATP to yield 4-phospho-L-aspartate, which is involved in the branched biosynthetic pathway leading to the biosynthesis of amino acids threonine, isoleucine and methionine. This is Aspartokinase 3 (yclM) from Bacillus subtilis (strain 168).